Consider the following 419-residue polypeptide: Gamma-glutamyl phosphate reductase (419 aa).

Belongs to the gamma-glutamyl phosphate reductase family.

It localises to the cytoplasm. The enzyme catalyses L-glutamate 5-semialdehyde + phosphate + NADP(+) = L-glutamyl 5-phosphate + NADPH + H(+). It functions in the pathway amino-acid biosynthesis; L-proline biosynthesis; L-glutamate 5-semialdehyde from L-glutamate: step 2/2. Its function is as follows. Catalyzes the NADPH-dependent reduction of L-glutamate 5-phosphate into L-glutamate 5-semialdehyde and phosphate. The product spontaneously undergoes cyclization to form 1-pyrroline-5-carboxylate. The chain is Gamma-glutamyl phosphate reductase from Ruthia magnifica subsp. Calyptogena magnifica.